The chain runs to 261 residues: Thiazole synthase (261 aa).

Lys-101 serves as the catalytic Schiff-base intermediate with DXP. Residues Gly-162, 188 to 189, and 210 to 211 contribute to the 1-deoxy-D-xylulose 5-phosphate site; these read AG and NT.

Belongs to the ThiG family. Homotetramer. Forms heterodimers with either ThiH or ThiS.

Its subcellular location is the cytoplasm. It catalyses the reaction [ThiS sulfur-carrier protein]-C-terminal-Gly-aminoethanethioate + 2-iminoacetate + 1-deoxy-D-xylulose 5-phosphate = [ThiS sulfur-carrier protein]-C-terminal Gly-Gly + 2-[(2R,5Z)-2-carboxy-4-methylthiazol-5(2H)-ylidene]ethyl phosphate + 2 H2O + H(+). It participates in cofactor biosynthesis; thiamine diphosphate biosynthesis. Catalyzes the rearrangement of 1-deoxy-D-xylulose 5-phosphate (DXP) to produce the thiazole phosphate moiety of thiamine. Sulfur is provided by the thiocarboxylate moiety of the carrier protein ThiS. In vitro, sulfur can be provided by H(2)S. The chain is Thiazole synthase from Azoarcus sp. (strain BH72).